The sequence spans 463 residues: Phosphoglucosamine mutase (463 aa).

S102 acts as the Phosphoserine intermediate in catalysis. 4 residues coordinate Mg(2+): S102, D240, D242, and D244. S102 bears the Phosphoserine mark.

The protein belongs to the phosphohexose mutase family. The cofactor is Mg(2+). In terms of processing, activated by phosphorylation.

It carries out the reaction alpha-D-glucosamine 1-phosphate = D-glucosamine 6-phosphate. Its function is as follows. Catalyzes the conversion of glucosamine-6-phosphate to glucosamine-1-phosphate. In Mycobacterium leprae (strain Br4923), this protein is Phosphoglucosamine mutase.